The chain runs to 325 residues: Secreted frizzled-related protein 3 (325 aa).

A signal peptide spans M1–A32. The region spanning A33–P150 is the FZ domain. Cystine bridges form between C35–C96, C43–C89, C80–C119, C108–C147, and C112–C136. An N-linked (GlcNAc...) asparagine glycan is attached at N49. Positions C178 to L298 constitute an NTR domain. A disordered region spans residues G297 to N325. A compositionally biased stretch (low complexity) spans S299 to S314. Residues G315–N325 show a composition bias toward polar residues.

Belongs to the secreted frizzled-related protein (sFRP) family. As to quaternary structure, interacts with MYOC. As to expression, expressed primarily in the cartilaginous cores of the long bone during embryonic and fetal development and in the appendicular skeleton (6-13 weeks). At 13 weeks of gestation, transcripts were present in early chondroblasts of the tarsal bones of the foot, the carpal bones of the hands and the epiphysis of long bones. Highly expressed in placenta and heart, followed by brain, skeletal muscle, kidney and pancreas. Weakly expressed in lung and liver.

It is found in the secreted. Its function is as follows. Soluble frizzled-related proteins (sFRPS) function as modulators of Wnt signaling through direct interaction with Wnts. They have a role in regulating cell growth and differentiation in specific cell types. SFRP3/FRZB appears to be involved in limb skeletogenesis. Antagonist of Wnt8 signaling. Regulates chondrocyte maturation and long bone development. In Homo sapiens (Human), this protein is Secreted frizzled-related protein 3 (FRZB).